The primary structure comprises 226 residues: Cytidylate kinase (226 aa).

11–19 (GPAAAGKST) serves as a coordination point for ATP.

It belongs to the cytidylate kinase family. Type 1 subfamily.

The protein resides in the cytoplasm. The enzyme catalyses CMP + ATP = CDP + ADP. The catalysed reaction is dCMP + ATP = dCDP + ADP. This is Cytidylate kinase from Bacillus licheniformis (strain ATCC 14580 / DSM 13 / JCM 2505 / CCUG 7422 / NBRC 12200 / NCIMB 9375 / NCTC 10341 / NRRL NRS-1264 / Gibson 46).